A 154-amino-acid polypeptide reads, in one-letter code: MPAGVGNASGSVLDMTSVRTVPSAVALVTFAGAALSGVIPAIARADPVGHQVTYTVTTTSDLMANIRYMSADPPSMAAFNADSSKYMITLHTPIAGGQPLVYTATLANPSQWAIVTASGGLRVNPEFHCEIVVDGQVVVSQDGGSGVQCSTRPW.

The chain crosses the membrane as a helical span at residues 23–43; the sequence is SAVALVTFAGAALSGVIPAIA.

It is found in the membrane. This is an uncharacterized protein from Mycobacterium tuberculosis (strain CDC 1551 / Oshkosh).